Here is a 777-residue protein sequence, read N- to C-terminus: Androgen receptor (777 aa).

Positions 1–416 (MEVHIGLGGV…IDYYFPPQKP (416 aa)) are modulating. Disordered stretches follow at residues 53–95 (CVHP…QAPQ), 110–132 (GEQG…YPES), and 205–241 (RRAG…LSEP). NR C4-type zinc fingers lie at residues 417–434 (CLSC…ALTC) and 453–472 (CASR…CPSC). Positions 417–489 (CLSCEDEASG…AGMTLGARKL (73 aa)) form a DNA-binding region, nuclear receptor. The NR LBD domain maps to 526–757 (SCQPIFLNVL…DFPEMMSEII (232 aa)). Asn-563, Arg-610, and Thr-735 together coordinate 17beta-hydroxy-5alpha-androstan-3-one.

It belongs to the nuclear hormone receptor family. NR3 subfamily. As to quaternary structure, binds DNA as a homodimer. Interacts via the ligand-binding domain with LXXLL and FXXLF motifs from coactivator proteins. Interacts (via ligand-binding domain) with TRIM68. Detected in somatic Leydig and Sertoli cells in testis with high level expression. Also detected at lower expression levels in forebrain and heart.

Its subcellular location is the nucleus. It localises to the cytoplasm. In terms of biological role, steroid hormone receptors are ligand-activated transcription factors that regulate eukaryotic gene expression and affect cellular proliferation and differentiation in target tissues. Transcription factor activity is modulated by bound coactivator and corepressor proteins. This chain is Androgen receptor (ar), found in Aquarana catesbeiana (American bullfrog).